Here is a 298-residue protein sequence, read N- to C-terminus: Protoheme IX farnesyltransferase (298 aa).

9 helical membrane-spanning segments follow: residues 16 to 36, 45 to 65, 93 to 113, 114 to 134, 141 to 161, 172 to 192, 223 to 243, 244 to 264, and 277 to 297; these read VVAL…PDMP, ALGF…NQLL, VFAG…VNVI, TAVL…VYLK, IVIG…AVTG, SLLV…LAIF, VLLA…VFYL, GGAV…LNPP, and IVYL…LPWV.

The protein belongs to the UbiA prenyltransferase family. Protoheme IX farnesyltransferase subfamily.

It is found in the cell inner membrane. It catalyses the reaction heme b + (2E,6E)-farnesyl diphosphate + H2O = Fe(II)-heme o + diphosphate. Its pathway is porphyrin-containing compound metabolism; heme O biosynthesis; heme O from protoheme: step 1/1. Its function is as follows. Converts heme B (protoheme IX) to heme O by substitution of the vinyl group on carbon 2 of heme B porphyrin ring with a hydroxyethyl farnesyl side group. In Xanthomonas oryzae pv. oryzae (strain MAFF 311018), this protein is Protoheme IX farnesyltransferase.